Here is a 236-residue protein sequence, read N- to C-terminus: Demethylmenaquinone methyltransferase (236 aa).

S-adenosyl-L-methionine contacts are provided by residues T58, D79, and 106 to 107 (NA).

It belongs to the class I-like SAM-binding methyltransferase superfamily. MenG/UbiE family.

It carries out the reaction a 2-demethylmenaquinol + S-adenosyl-L-methionine = a menaquinol + S-adenosyl-L-homocysteine + H(+). It functions in the pathway quinol/quinone metabolism; menaquinone biosynthesis; menaquinol from 1,4-dihydroxy-2-naphthoate: step 2/2. Its function is as follows. Methyltransferase required for the conversion of demethylmenaquinol (DMKH2) to menaquinol (MKH2). This chain is Demethylmenaquinone methyltransferase, found in Listeria welshimeri serovar 6b (strain ATCC 35897 / DSM 20650 / CCUG 15529 / CIP 8149 / NCTC 11857 / SLCC 5334 / V8).